The sequence spans 352 residues: Protein Wnt-11 (352 aa).

The first 22 residues, 1-22, serve as a signal peptide directing secretion; the sequence is MKIYFLLGTFLTFLLHTRICQG. N-linked (GlcNAc...) asparagine glycans are attached at residues N38 and N88. 5 disulfides stabilise this stretch: C78-C89, C128-C136, C138-C155, C207-C221, and C209-C216. Residue S213 is the site of O-palmitoleoyl serine; by PORCN attachment. A sulfotyrosine mark is found at Y273 and Y280. 6 cysteine pairs are disulfide-bonded: C281–C312, C297–C307, C311–C351, C327–C342, C329–C339, and C334–C335. An N-linked (GlcNAc...) asparagine glycan is attached at N298.

The protein belongs to the Wnt family. Glycosylation is required for protein secretion. Post-translationally, palmitoleoylation is required for efficient binding to frizzled receptors. Depalmitoleoylation leads to Wnt signaling pathway inhibition. As to expression, in embryos, expressed in the neural tube, dorsal somite, mesenchymal cells within the dorsal fin, branchial arches and heart muscle, becoming expressed throughout the myocardium by the tadpole stage (stage 45). Prior to neural crest cell migration, expressed in a domain flanking the neural crest on the medial or neural (the opposite side to wnt11b). Weakly expressed in the developing pronephros from stage 25, with expression increasing from stages 30 to 35.

The protein resides in the secreted. Its subcellular location is the extracellular space. It localises to the extracellular matrix. Its function is as follows. Ligand for members of the frizzled family of seven transmembrane receptors. Shares much functionality with wnt11b. Signals through a non-canonical Wnt pathway to activate Jun-N-terminal kinase (JNK) to regulate gastrulation movements. Acts in a non-cell-autonomous manner to control neural crest migration, probably acting as an extracellular signal from surrounding tissue, but is not required for neural crest induction. Acts redundantly with wnt11b during pronephros induction. Regulates cardiac morphogenesis through the activation of JNK, but is not required for cardiac differentiation. Essential for dorsal fin development; required for an epithelial to mesenchymal transformation event prior to migration of cells into the fin, and ultimately for maintenance of fin structure. Mediates dorsal fin development through a non-canonical pathway mediated by Ca(2+). The chain is Protein Wnt-11 from Xenopus laevis (African clawed frog).